The primary structure comprises 473 residues: Ribulose bisphosphate carboxylase large chain (473 aa).

Residues N116 and T166 each coordinate substrate. K168 serves as the catalytic Proton acceptor. Position 170 (K170) interacts with substrate. 3 residues coordinate Mg(2+): K194, D196, and E197. K194 carries the post-translational modification N6-carboxylysine. Residue H287 is the Proton acceptor of the active site. The substrate site is built by R288, H320, and S372.

It belongs to the RuBisCO large chain family. Type I subfamily. As to quaternary structure, heterohexadecamer of 8 large chains and 8 small chains. Requires Mg(2+) as cofactor.

The catalysed reaction is 2 (2R)-3-phosphoglycerate + 2 H(+) = D-ribulose 1,5-bisphosphate + CO2 + H2O. It carries out the reaction D-ribulose 1,5-bisphosphate + O2 = 2-phosphoglycolate + (2R)-3-phosphoglycerate + 2 H(+). In terms of biological role, ruBisCO catalyzes two reactions: the carboxylation of D-ribulose 1,5-bisphosphate, the primary event in carbon dioxide fixation, as well as the oxidative fragmentation of the pentose substrate. Both reactions occur simultaneously and in competition at the same active site. This Hydrogenophaga pseudoflava (Pseudomonas carboxydoflava) protein is Ribulose bisphosphate carboxylase large chain.